The chain runs to 167 residues: MINVEIVRHYNKWREHKQINKSLIKKITQNILLRFDNFSKIKQFELSILLTNAAEILILNKQFRNIEKATNVLSFPSNELNWQDLYSKLEFLGDSDYMHLGDIAFCYEVIYNESCEQYKTFENHFIHLLIHSILHLIGFDHQNDTEANIMENLEIEILSYFGIFPPY.

Residues histidine 131, histidine 135, and histidine 141 each coordinate Zn(2+).

Belongs to the endoribonuclease YbeY family. Zn(2+) is required as a cofactor.

The protein localises to the cytoplasm. Functionally, single strand-specific metallo-endoribonuclease involved in late-stage 70S ribosome quality control and in maturation of the 3' terminus of the 16S rRNA. In Rickettsia rickettsii (strain Sheila Smith), this protein is Endoribonuclease YbeY.